The sequence spans 85 residues: Putative membrane protein insertion efficiency factor (85 aa).

This sequence belongs to the UPF0161 family.

It is found in the cell inner membrane. In terms of biological role, could be involved in insertion of integral membrane proteins into the membrane. The polypeptide is Putative membrane protein insertion efficiency factor (Escherichia coli O157:H7).